The primary structure comprises 81 residues: Small ribosomal subunit protein bS18 (81 aa).

This sequence belongs to the bacterial ribosomal protein bS18 family. Part of the 30S ribosomal subunit. Forms a tight heterodimer with protein bS6.

Functionally, binds as a heterodimer with protein bS6 to the central domain of the 16S rRNA, where it helps stabilize the platform of the 30S subunit. This is Small ribosomal subunit protein bS18 from Lactococcus lactis subsp. cremoris (strain MG1363).